A 509-amino-acid chain; its full sequence is ATP synthase subunit alpha (509 aa).

Gly169–Thr176 provides a ligand contact to ATP.

Belongs to the ATPase alpha/beta chains family. F-type ATPases have 2 components, CF(1) - the catalytic core - and CF(0) - the membrane proton channel. CF(1) has five subunits: alpha(3), beta(3), gamma(1), delta(1), epsilon(1). CF(0) has three main subunits: a(1), b(2) and c(9-12). The alpha and beta chains form an alternating ring which encloses part of the gamma chain. CF(1) is attached to CF(0) by a central stalk formed by the gamma and epsilon chains, while a peripheral stalk is formed by the delta and b chains.

Its subcellular location is the cell inner membrane. It catalyses the reaction ATP + H2O + 4 H(+)(in) = ADP + phosphate + 5 H(+)(out). Produces ATP from ADP in the presence of a proton gradient across the membrane. The alpha chain is a regulatory subunit. The polypeptide is ATP synthase subunit alpha (Rhizobium leguminosarum bv. trifolii (strain WSM2304)).